The chain runs to 213 residues: Histone H1 (213 aa).

Over residues 1 to 25 (MAAATASAAATPAKKAAPKKPAAAP) the composition is skewed to low complexity. Disordered stretches follow at residues 1 to 30 (MAAATASAAATPAKKAAPKKPAAAPEHPSY) and 81 to 213 (GEFV…AKSS). Positions 26 to 97 (EHPSYKEMLT…GPSGTVKLAK (72 aa)) constitute an H15 domain. Low complexity-rich tracts occupy residues 102 to 113 (AAAPKKPAAKKA), 123 to 137 (KKAAAPKKAAAPKSA), 157 to 176 (KKAAAPKKVAAPVEKPAPVK), and 203 to 213 (PKKAATPAKSS).

This sequence belongs to the histone H1/H5 family.

It is found in the nucleus. Its subcellular location is the chromosome. Its function is as follows. Could act as an H1-type linker histone. The polypeptide is Histone H1 (Ascobolus immersus).